The primary structure comprises 171 residues: Adenine phosphoribosyltransferase (171 aa).

This sequence belongs to the purine/pyrimidine phosphoribosyltransferase family. Homodimer.

It is found in the cytoplasm. It catalyses the reaction AMP + diphosphate = 5-phospho-alpha-D-ribose 1-diphosphate + adenine. The protein operates within purine metabolism; AMP biosynthesis via salvage pathway; AMP from adenine: step 1/1. Catalyzes a salvage reaction resulting in the formation of AMP, that is energically less costly than de novo synthesis. In Synechococcus sp. (strain ATCC 27144 / PCC 6301 / SAUG 1402/1) (Anacystis nidulans), this protein is Adenine phosphoribosyltransferase.